The sequence spans 266 residues: ES1 protein homolog, mitochondrial (266 aa).

The transit peptide at 1–39 directs the protein to the mitochondrion; it reads MAAVRVLVSPRLASALLPLSGRHRTTSQRAAIHSSAPRP. An N6-acetyllysine mark is found at Lys-149, Lys-155, and Lys-162. Position 201 is an N6-acetyllysine; alternate (Lys-201). At Lys-201 the chain carries N6-succinyllysine; alternate. Lys-217 carries the N6-acetyllysine modification. An N6-acetyllysine; alternate mark is found at Lys-221 and Lys-231. Lys-221 and Lys-231 each carry N6-succinyllysine; alternate.

This sequence belongs to the ES1 family.

It localises to the mitochondrion. This chain is ES1 protein homolog, mitochondrial, found in Rattus norvegicus (Rat).